A 779-amino-acid polypeptide reads, in one-letter code: Ribonucleoside-diphosphate reductase large subunit (779 aa).

Substrate contacts are provided by residues S178, 193-194, G222, 420-424, and 614-618; these read SC, NLCIE, and PTATS. A disulfide bond links C194 and C440. The active-site Proton acceptor is N420. The active-site Cysteine radical intermediate is C422. E424 serves as the catalytic Proton acceptor.

This sequence belongs to the ribonucleoside diphosphate reductase large chain family. In terms of assembly, heterotetramer composed of a homodimer of the large subunit (R1) and a homodimer of the small subunit (R2). Larger multisubunit protein complex are also active, composed of (R1)n(R2)n.

It catalyses the reaction a 2'-deoxyribonucleoside 5'-diphosphate + [thioredoxin]-disulfide + H2O = a ribonucleoside 5'-diphosphate + [thioredoxin]-dithiol. With respect to regulation, under complex allosteric control mediated by deoxynucleoside triphosphates and ATP binding. The type of nucleotide bound at the specificity site determines substrate preference. It seems probable that ATP makes the enzyme reduce CDP and UDP, dGTP favors ADP reduction and dTTP favors GDP reduction. In terms of biological role, ribonucleoside-diphosphate reductase holoenzyme provides the precursors necessary for viral DNA synthesis. Allows virus growth in non-dividing cells. Catalyzes the biosynthesis of deoxyribonucleotides from the corresponding ribonucleotides. This chain is Ribonucleoside-diphosphate reductase large subunit, found in Ornithodoros (relapsing fever ticks).